The sequence spans 252 residues: Ubiquinone biosynthesis O-methyltransferase (252 aa).

S-adenosyl-L-methionine contacts are provided by Arg-45, Gly-76, Asp-97, and Met-141.

This sequence belongs to the methyltransferase superfamily. UbiG/COQ3 family.

The catalysed reaction is a 3-demethylubiquinol + S-adenosyl-L-methionine = a ubiquinol + S-adenosyl-L-homocysteine + H(+). The enzyme catalyses a 3-(all-trans-polyprenyl)benzene-1,2-diol + S-adenosyl-L-methionine = a 2-methoxy-6-(all-trans-polyprenyl)phenol + S-adenosyl-L-homocysteine + H(+). It functions in the pathway cofactor biosynthesis; ubiquinone biosynthesis. In terms of biological role, O-methyltransferase that catalyzes the 2 O-methylation steps in the ubiquinone biosynthetic pathway. The sequence is that of Ubiquinone biosynthesis O-methyltransferase from Caulobacter sp. (strain K31).